The chain runs to 402 residues: MAQDRKKVLVLGAGYAGLQTVTKLQKELSADAAEITLINKNEYHYESTWLHEASAGTINYEDLLYPVEKTVNKDKVNFVVAEVTKIDRNAKRVETDKGVYDFDILVVALGFVSETFGIDGMKEHAFQIENVLTSRKLSRHIEDKFANYAASKEKDDKDLSILVGGAGFTGIEFLGELTDRIPELCSKYGVDQSKVKLTCVEAAPKMLPMFSDDLVSYAVKYLEDRGVEFKIATPIVACNEKGFVVEVNGEKQQLEAGTSVWTAGVRGSHLMEESFEGVKRGRVINKQDLTIEGHNDIFVIGDCSAFIPAGEERPLPTTAQIAMQQGEHTASNIKRLLNGESTQDFQYVNRGTVCSLGANDGVGIVYGRDIAGKKAAFLKKVIDTRAIYKLGGIGLAFKKGKF.

FAD-binding positions include 12–16 (GAGYA), 39–40 (NK), and valine 83. The active site involves glutamate 172. Residues aspartate 302, 319-320 (AQ), and lysine 379 each bind FAD.

It belongs to the NADH dehydrogenase family. The cofactor is FAD.

Its subcellular location is the cell membrane. It carries out the reaction a quinone + NADH + H(+) = a quinol + NAD(+). Functionally, alternative, nonproton pumping NADH:quinone oxidoreductase that delivers electrons to the respiratory chain by oxidation of NADH and reduction of quinones, and contributes to the regeneration of NAD(+). In Staphylococcus epidermidis (strain ATCC 35984 / DSM 28319 / BCRC 17069 / CCUG 31568 / BM 3577 / RP62A), this protein is Type II NADH:quinone oxidoreductase.